The chain runs to 226 residues: Probable peroxiredoxin prdx-3 (226 aa).

The Thioredoxin domain occupies 33–191 (LGPKNTVPAF…TLRVLKAFQF (159 aa)). The active-site Cysteine sulfenic acid (-SOH) intermediate is the cysteine 78.

It belongs to the peroxiredoxin family. AhpC/Prx1 subfamily. In terms of assembly, homodimer; disulfide-linked, upon oxidation.

The catalysed reaction is a hydroperoxide + [thioredoxin]-dithiol = an alcohol + [thioredoxin]-disulfide + H2O. Its function is as follows. Thiol-specific peroxidase that catalyzes the reduction of hydrogen peroxide and organic hydroperoxides to water and alcohols, respectively. Plays a role in cell protection against oxidative stress by detoxifying peroxides and as sensor of hydrogen peroxide-mediated signaling events. This chain is Probable peroxiredoxin prdx-3 (prdx-3), found in Caenorhabditis elegans.